Here is a 1605-residue protein sequence, read N- to C-terminus: Sister chromatid cohesion protein PDS5 homolog A (1605 aa).

HEAT repeat units follow at residues 50–89, 96–136, 146–183, 184–221, 261–298, 302–339, 341–378, 380–416, 552–591, 644–681, 723–758, 821–860, 961–1000, and 1050–1088; these read KSIQPFLDAVIKPEILNHQDKDVKLLVASCVSEITRITAP, NIMK…YRSC, DLVKEVFTTFLDVARDDHPEIVFSSMQNIMIVLLEESE, DVQEHLLLILLSKLGRNRSDVRDAARRLAMKVIEHCAP, QALSGVAPYLTGELLADKLETRLKVVGLVGELFSLPGR, EEFDSIFLEFLKRLTDRVVEVRMAILDHIKDCLLSDPL, AEASQIISALCDRLLDYDENIRKQVVAVICDVSVSALT, IPVDTMKLVAERLRDKAILVKTYTMERLTELFRVYCL, ANIWKILTNLLDPNTSITQASRIRDDMLKILSEKHSLYDF, SLFDGAEEELISFLKDDDEMMKEGTLKILAKAGGTIRE, KSLSVLYKRLVDMLEDKRYQPAVLQCLGCIAQIAMP, AGVDDLLGILKNILSFGEVSEDLESSSVDKAHLRLAAAKA, LYPHHILPYLVHALAHHSCPDVEKCKDVKEYEMIYRQLYL, and HAICELGLSIINHLTQKEPDLQGEITPVSLPPTLYKPSE. 2 disordered regions span residues 1155–1182 and 1203–1262; these read LRAQGTKTRKGKKNKSVPAEDENGKNDV and ESSN…PKVQ. Residues 1211–1225 show a composition bias toward basic and acidic residues; sequence SPSERAEICQRDQKG. The Nuclear localization signal 1 motif lies at 1226–1233; that stretch reads NKRNVGDA. Position 1274 is a phosphoserine (serine 1274). A compositionally biased stretch (basic and acidic residues) spans 1279-1295; it reads NVSLDSHDENSDQEKML. 3 disordered regions span residues 1279-1307, 1324-1353, and 1423-1605; these read NVSLDSHDENSDQEKMLESISPRKRKKSL, ERSRSAGGGDSKLKSASGSMKKRKNVSGLA, and GKTA…RTAI. Serine 1299 carries the phosphoserine modification. Basic residues-rich tracts occupy residues 1425–1442 and 1464–1476; these read TAKKSRTSKGNSKKKRSS and KGKRTPKKNLKQL. The short motif at 1426–1433 is the Nuclear localization signal 2 element; sequence AKKSRTSK. 3 stretches are compositionally biased toward basic and acidic residues: residues 1477-1495, 1514-1527, and 1534-1574; these read HPKDTPKSLSLEHEKVESR, GEEKSESEGKSLKE, and VVNK…NEME. Phosphoserine occurs at positions 1524, 1562, and 1584. Residues 1575–1585 are compositionally biased toward acidic residues; sequence REAEENAETSD. The residue at position 1588 (threonine 1588) is a Phosphothreonine.

It belongs to the PDS5 family. In terms of assembly, interacts with the cohesin complex. Interacts with DEK3.

It localises to the nucleus. Cohesin cofactor dispensable during the meiotic division but playing an important role in DNA repair by homologous recombination (HR) probably by helping SMC5/SMC6 complex. Regulator of sister chromatid cohesion in mitosis which may stabilize cohesin complex association with chromatin. May couple sister chromatid cohesion during mitosis to DNA replication. Cohesion ensures that chromosome partitioning is accurate in both meiotic and mitotic cells and plays an important role in DNA repair. This Arabidopsis thaliana (Mouse-ear cress) protein is Sister chromatid cohesion protein PDS5 homolog A.